The sequence spans 403 residues: Keratin, type I cytoskeletal 19 (403 aa).

The tract at residues 1–82 (MTSYSYRQTS…AVSDGLLSGN (82 aa)) is head. R7 carries the omega-N-methylarginine modification. Phosphoserine is present on residues S14 and S22. R24 carries the asymmetric dimethylarginine; alternate modification. R24 bears the Omega-N-methylarginine; alternate mark. S27 is modified (phosphoserine). R32 bears the Omega-N-methylarginine mark. Phosphoserine occurs at positions 35 and 40. Residues R43 and R51 each carry the omega-N-methylarginine modification. Phosphoserine is present on S57. The residue at position 64 (R64) is an Omega-N-methylarginine. Phosphoserine is present on residues S67 and S75. The segment at 83-118 (EKITMQNLNDRLASYLDKVRALEQANGELEVKIRDW) is coil 1A. The region spanning 83 to 394 (EKITMQNLND…SLLEGQEAHY (312 aa)) is the IF rod domain. Residues 119–136 (YQKQGPGPSRDYNHYFKT) form a linker 1 region. Positions 137–228 (IEDLRDKILG…KNHEEEITAL (92 aa)) are coil 1B. The segment at 229–251 (RSQVGGQVSVEVDSTPGVDLAKI) is linker 12. The tract at residues 247-393 (DLAKILSEMR…RSLLEGQEAH (147 aa)) is necessary for interaction with PNN. The segment at 252–390 (LSEMRSQYEI…ATYRSLLEGQ (139 aa)) is coil 2. At T326 the chain carries Phosphothreonine. The interval 391–403 (EAHYNNLPTPKAI) is rod-like helical tail. The residue at position 394 (Y394) is a Phosphotyrosine.

It belongs to the intermediate filament family. Heterotetramer of two type I and two type II keratins. Interacts with PNN and the actin-binding domain of DMD.

Its function is as follows. Involved in the organization of myofibers. Together with KRT8, helps to link the contractile apparatus to dystrophin at the costameres of striated muscle. This chain is Keratin, type I cytoskeletal 19 (Krt19), found in Mus musculus (Mouse).